The chain runs to 1290 residues: 1-phosphatidylinositol 4,5-bisphosphate phosphodiesterase gamma-1 (1290 aa).

Ala2 carries the post-translational modification N-acetylalanine. Positions 27–142 (RSLEVGTVMT…WIKGLTWLME (116 aa)) constitute a PH 1 domain. Positions 152–187 (QIERWLRKQFYSVDRNREDRISAKDLKNMLSQVNYR) constitute an EF-hand domain. Positions 165, 167, 169, 171, and 176 each coordinate Ca(2+). Positions 320 to 464 (ETMNNPLSHY…LKRKILIKHK (145 aa)) constitute a PI-PLC X-box domain. Residues His335 and His380 contribute to the active site. One can recognise a PH 2; first part domain in the interval 489-523 (SIKNGILYLEDPVNHEWYPHYFVLTSSKIYYSEET). Tyr506 carries the post-translational modification Phosphotyrosine. Residues 522–546 (ETSSDQGNEDEEEPKEASGSTELHS) form a disordered region. SH2 domains follow at residues 550 to 657 (WFHG…SEPV) and 668 to 756 (WYHA…RYPI). Tyr771 carries the post-translational modification Phosphotyrosine; by SYK. Tyr775 bears the Phosphotyrosine mark. At Tyr783 the chain carries Phosphotyrosine; by ITK, SYK and TXK. The SH3 domain maps to 791 to 851 (TFKCAVKALF…PSNYVEEMIN (61 aa)). Positions 895–931 (FVFSISMPSVAQWSLDVAADSQEELQDWVKKIREVAQ) constitute a PH 2; second part domain. Positions 953–1070 (LSELVVYCRP…GYVLQPSTMR (118 aa)) constitute a PI-PLC Y-box domain. Tyr977 bears the Phosphotyrosine mark. A C2 domain is found at 1071–1194 (DEAFDPFDKS…TGYRAVPLKN (124 aa)). Phosphoserine occurs at positions 1221, 1227, 1233, and 1248. Residue Tyr1253 is modified to Phosphotyrosine. A Phosphoserine modification is found at Ser1263. Residues 1271 to 1290 (FDSRERRAPRRTRVNGDNRL) are disordered.

In terms of assembly, interacts with AGAP2 via its SH3 domain. Interacts (via SH2 domain) with RET. Interacts with FLT1 (tyrosine-phosphorylated). Interacts (via SH2 domain) with FGFR1, FGFR2, FGFR3 and FGFR4 (phosphorylated). Interacts with LAT (phosphorylated) upon TCR activation. Interacts (via SH3 domain) with the Pro-rich domain of TNK1. Associates with BLNK, VAV1, GRB2 and NCK1 in a B-cell antigen receptor-dependent fashion. Interacts with CBLB in activated T-cells; which inhibits phosphorylation. Interacts with SHB. Interacts (via SH3 domain) with the Arg/Gly-rich-flanked Pro-rich domains of KHDRBS1/SAM68. This interaction is selectively regulated by arginine methylation of KHDRBS1/SAM68. Interacts with INPP5D/SHIP1, THEMIS and CLNK. Interacts with AXL, FLT4 and KIT. Interacts with RALGPS1. Interacts (via the SH2 domains) with VIL1 (phosphorylated at C-terminus tyrosine phosphorylation sites). Interacts (via SH2 domain) with PDGFRA and PDGFRB (tyrosine phosphorylated). Interacts with PIP5K1C. Interacts with NTRK1 and NTRK2 (phosphorylated upon ligand-binding). Interacts with SYK; activates PLCG1. Interacts with GRB2, LAT and THEMIS upon TCR activation in thymocytes. Interacts with TESPA1; the association is increased with prolonged stimulation of the TCR and may facilitate the assembly of the LAT signalosome. Interacts (via C-terminal proline-rich domain (PRD)) with PLCG1 (via SH3 domain); this interaction leads to guanine nucleotide exchange from PlCG1 to DNM1 and enhances DNM1-dependent endocytosis. Ca(2+) serves as cofactor. In terms of processing, ubiquitinated by CBLB in activated T-cells. Tyrosine phosphorylated in response to signaling via activated FLT3, KIT and PDGFRA. Tyrosine phosphorylated by activated FGFR1, FGFR2, FGFR3 and FGFR4. Tyrosine phosphorylated by activated FLT1 and KDR. Tyrosine phosphorylated by activated PDGFRB. The receptor-mediated activation of PLCG1 involves its phosphorylation by tyrosine kinases, in response to ligation of a variety of growth factor receptors and immune system receptors. For instance, SYK phosphorylates and activates PLCG1 in response to ligation of the B-cell receptor. May be dephosphorylated by PTPRJ. Phosphorylated by ITK and TXK on Tyr-783 upon TCR activation in T-cells.

It is found in the cell projection. Its subcellular location is the lamellipodium. The protein resides in the ruffle. It catalyses the reaction a 1,2-diacyl-sn-glycero-3-phospho-(1D-myo-inositol-4,5-bisphosphate) + H2O = 1D-myo-inositol 1,4,5-trisphosphate + a 1,2-diacyl-sn-glycerol + H(+). The enzyme catalyses a 1,2-diacyl-sn-glycero-3-phospho-(1D-myo-inositol) + H2O = 1D-myo-inositol 1-phosphate + a 1,2-diacyl-sn-glycerol + H(+). Its activity is regulated as follows. Activated by phosphorylation on tyrosine residues. In terms of biological role, mediates the production of the second messenger molecules diacylglycerol (DAG) and inositol 1,4,5-trisphosphate (IP3). Plays an important role in the regulation of intracellular signaling cascades. Becomes activated in response to ligand-mediated activation of receptor-type tyrosine kinases, such as PDGFRA, PDGFRB, EGFR, FGFR1, FGFR2, FGFR3 and FGFR4. Plays a role in actin reorganization and cell migration. Guanine nucleotide exchange factor that binds the GTPase DNM1 and catalyzes the dissociation of GDP, allowing a GTP molecule to bind in its place, therefore enhancing DNM1-dependent endocytosis. The polypeptide is 1-phosphatidylinositol 4,5-bisphosphate phosphodiesterase gamma-1 (Rattus norvegicus (Rat)).